We begin with the raw amino-acid sequence, 363 residues long: Protein-arginine kinase (363 aa).

Residues 24–254 (IVLSSRIRLA…AQLIEQERSA (231 aa)) enclose the Phosphagen kinase C-terminal domain. ATP contacts are provided by residues 27-31 (SSRIR), histidine 92, arginine 125, 176-180 (RASVM), and 207-212 (RGIYGE). Positions 337–342 (RDIKRA) match the RDXXRA motif of the pArg binding pocket involved in allosteric regulation motif.

The protein belongs to the ATP:guanido phosphotransferase family.

It catalyses the reaction L-arginyl-[protein] + ATP = N(omega)-phospho-L-arginyl-[protein] + ADP + H(+). Appears to be allosterically activated by the binding of pArg-containing polypeptides to the pArg-binding pocket localized in the C-terminal domain of McsB. Functionally, catalyzes the specific phosphorylation of arginine residues in a large number of proteins. Is part of the bacterial stress response system. Protein arginine phosphorylation has a physiologically important role and is involved in the regulation of many critical cellular processes, such as protein homeostasis, motility, competence, and stringent and stress responses, by regulating gene expression and protein activity. The polypeptide is Protein-arginine kinase (Bacillus pumilus (strain SAFR-032)).